The sequence spans 109 residues: Movement protein (109 aa).

Positions 1–28 (MDSFGRAPPLWPQSALPRVPGAAPSSSG) are disordered. Residues 34 to 54 (VGEIAIFTFVAVLALYLLWSW) traverse the membrane as a helical segment.

Belongs to the mastrevirus movement protein family. As to quaternary structure, interacts with the capsid protein (CP). Part of a MP-CP-viral DNA complex.

It localises to the host membrane. Functionally, involved in the viral transport within, and between cells. The protein is Movement protein of Sugarcane streak virus (isolate South Africa) (SSV).